Consider the following 998-residue polypeptide: RNA-directed RNA polymerase (998 aa).

Interaction with host mitochondria outer membrane stretches follow at residues 1–67 (MTLK…DKTK) and 233–250 (VRTS…RMIG). The homomultimerization stretch occupies residues 1–400 (MTLKVILGEH…KPTMPRVHWP (400 aa)). Residues 17–34 (LLVGIATVSGCGAVVYCI) traverse the membrane as a helical segment. Residues 35-998 (SKFWGYGAIA…AQPQPSNNRK (964 aa)) form a cytoplasmic region. Residues 91–282 (NGHAVSGAVR…LVYTIPQYVI (192 aa)) are capping. D692 acts as the For RdRp/TNTase activity in catalysis. The segment at 700-800 (IQKSINRAAK…MVLRLYGPTA (101 aa)) is homomultimerization. The segment at 901-998 (AKQTRANPGT…AQPQPSNNRK (98 aa)) is disordered. 2 stretches are compositionally biased toward polar residues: residues 904–913 (TRANPGTSRP) and 947–961 (GKTN…TAGE). Residues 971-984 (KGPRGGKTNTRRTP) show a composition bias toward basic residues.

The protein belongs to the nodaviridae RNA polymerase family. In terms of assembly, homododecamer. Forms 2 stacked rings of 35-nm in diameter, arranged in a crown-like structure at the opening of virus-induced replication vesicles. Interacts with protein B2. Mn(2+) is required as a cofactor.

It localises to the host mitochondrion outer membrane. It catalyses the reaction RNA(n) + a ribonucleoside 5'-triphosphate = RNA(n+1) + diphosphate. Its activity is regulated as follows. Drastically inhibited by phosphonoacetic acid. Only slightly inhibited by gliotoxin. Its function is as follows. RNA-dependent RNA polymerase, which replicates the viral genome composed of 2 RNA segments, RNA1 and RNA2. Does not need an exogenous primer. Also possesses a terminal nucleotidyl transferase (TNTase) activity. The TNTase catalyzes the addition of nucleotide to the 3'-end of plus- and minus-stranded RNAs, probably to repair the 3'-end nucleotide loss. Forms the open necked connection to the cytosol of the virus-induced replication vesicles. Mediates viral RNA1 recruitment. The chain is RNA-directed RNA polymerase from Costelytra zealandica (Greater wax moth).